The sequence spans 362 residues: Large ribosomal subunit protein uL2m (362 aa).

The N-terminal 23 residues, 1-23, are a transit peptide targeting the mitochondrion; that stretch reads MLSYNRFRGYLIPQIHALKLFRY. The disordered stretch occupies residues 306–362; the sequence is AMNPCDHPHGGGGGKSIGNKPSQSPWGVLAKGGYKTRRGKNVNKLLVRDRPRGKEKR. Basic and acidic residues predominate over residues 351–362; that stretch reads LVRDRPRGKEKR.

This sequence belongs to the universal ribosomal protein uL2 family. Component of the mitochondrial large ribosomal subunit (mt-LSU). Mature yeast 74S mitochondrial ribosomes consist of a small (37S) and a large (54S) subunit. The 37S small subunit contains a 15S ribosomal RNA (15S mt-rRNA) and at least 32 different proteins. The 54S large subunit contains a 21S rRNA (21S mt-rRNA) and at least 45 different proteins. uL2m has a Na/K ligand binding site.

It is found in the mitochondrion. Functionally, component of the mitochondrial ribosome (mitoribosome), a dedicated translation machinery responsible for the synthesis of mitochondrial genome-encoded proteins, including at least some of the essential transmembrane subunits of the mitochondrial respiratory chain. The mitoribosomes are attached to the mitochondrial inner membrane and translation products are cotranslationally integrated into the membrane. This chain is Large ribosomal subunit protein uL2m (rml2), found in Schizosaccharomyces pombe (strain 972 / ATCC 24843) (Fission yeast).